The chain runs to 551 residues: Methionine--tRNA ligase (551 aa).

Positions 12–22 (PYANGPLHFGH) match the 'HIGH' region motif. Residues cysteine 144, cysteine 147, cysteine 157, and cysteine 160 each contribute to the Zn(2+) site. A 'KMSKS' region motif is present at residues 330 to 334 (QFSKS). Position 333 (lysine 333) interacts with ATP.

Belongs to the class-I aminoacyl-tRNA synthetase family. MetG type 1 subfamily. Monomer. Requires Zn(2+) as cofactor.

It is found in the cytoplasm. The catalysed reaction is tRNA(Met) + L-methionine + ATP = L-methionyl-tRNA(Met) + AMP + diphosphate. Is required not only for elongation of protein synthesis but also for the initiation of all mRNA translation through initiator tRNA(fMet) aminoacylation. The protein is Methionine--tRNA ligase (metG) of Chlamydia pneumoniae (Chlamydophila pneumoniae).